Here is a 33-residue protein sequence, read N- to C-terminus: Cyanophlyctin-beta (33 aa).

Cys27 and Cys33 are disulfide-bonded.

Expressed by the skin glands.

The protein localises to the secreted. Its function is as follows. Antimicrobial peptide active against E.coli (MIC=5 uM), K.pneumoniae (MIC=10 uM), B.cereus (MIC=7 uM) and S.aureus (MIC=12 uM). Has very little hemolytic activity. In Euphlyctis cyanophlyctis (Skittering frog), this protein is Cyanophlyctin-beta.